Here is a 310-residue protein sequence, read N- to C-terminus: GPN-loop GTPase 2 (310 aa).

A2 carries the N-acetylalanine modification. 19–24 (GSGKTT) contributes to the GTP binding site. The Gly-Pro-Asn (GPN)-loop; involved in dimer interface motif lies at 76-78 (GPN). A GTP-binding site is contributed by 178–181 (SKMD).

It belongs to the GPN-loop GTPase family. In terms of assembly, heterodimers with GPN1 or GPN3. Binds to RNA polymerase II (RNAPII).

In terms of biological role, small GTPase required for proper localization of RNA polymerase II and III (RNAPII and RNAPIII). May act at an RNAP assembly step prior to nuclear import. This chain is GPN-loop GTPase 2, found in Rattus norvegicus (Rat).